The primary structure comprises 179 residues: ADP-ribosylation factor-like protein 5A (179 aa).

Gly-2 carries N-myristoyl glycine lipidation. GTP-binding positions include 23-30 (GLDNAGKT), 66-70 (DIGGQ), 125-128 (NKQD), and Ala-159.

Belongs to the small GTPase superfamily. Arf family. In terms of tissue distribution, low amounts were found in most tissues examined with highest levels in brain, intestine and thymus.

Lacks ADP-ribosylation enhancing activity. The sequence is that of ADP-ribosylation factor-like protein 5A (Arl5a) from Rattus norvegicus (Rat).